A 372-amino-acid chain; its full sequence is Alanine racemase (372 aa).

The Proton acceptor; specific for D-alanine role is filled by Lys-48. Lys-48 bears the N6-(pyridoxal phosphate)lysine mark. Arg-143 serves as a coordination point for substrate. Tyr-268 (proton acceptor; specific for L-alanine) is an active-site residue. Met-316 contributes to the substrate binding site.

This sequence belongs to the alanine racemase family. Pyridoxal 5'-phosphate is required as a cofactor.

It carries out the reaction L-alanine = D-alanine. It participates in amino-acid biosynthesis; D-alanine biosynthesis; D-alanine from L-alanine: step 1/1. Functionally, catalyzes the interconversion of L-alanine and D-alanine. May also act on other amino acids. In Vibrio vulnificus (strain YJ016), this protein is Alanine racemase (alr).